Consider the following 226-residue polypeptide: Leucyl/phenylalanyl-tRNA--protein transferase (226 aa).

It belongs to the L/F-transferase family.

It localises to the cytoplasm. It carries out the reaction N-terminal L-lysyl-[protein] + L-leucyl-tRNA(Leu) = N-terminal L-leucyl-L-lysyl-[protein] + tRNA(Leu) + H(+). The catalysed reaction is N-terminal L-arginyl-[protein] + L-leucyl-tRNA(Leu) = N-terminal L-leucyl-L-arginyl-[protein] + tRNA(Leu) + H(+). The enzyme catalyses L-phenylalanyl-tRNA(Phe) + an N-terminal L-alpha-aminoacyl-[protein] = an N-terminal L-phenylalanyl-L-alpha-aminoacyl-[protein] + tRNA(Phe). Its function is as follows. Functions in the N-end rule pathway of protein degradation where it conjugates Leu, Phe and, less efficiently, Met from aminoacyl-tRNAs to the N-termini of proteins containing an N-terminal arginine or lysine. This is Leucyl/phenylalanyl-tRNA--protein transferase from Bradyrhizobium sp. (strain ORS 278).